The sequence spans 490 residues: UDP-N-acetylmuramate--L-alanine ligase (490 aa).

ATP is bound at residue 126 to 132 (GTHGKTT).

Belongs to the MurCDEF family.

It is found in the cytoplasm. The catalysed reaction is UDP-N-acetyl-alpha-D-muramate + L-alanine + ATP = UDP-N-acetyl-alpha-D-muramoyl-L-alanine + ADP + phosphate + H(+). It functions in the pathway cell wall biogenesis; peptidoglycan biosynthesis. In terms of biological role, cell wall formation. This is UDP-N-acetylmuramate--L-alanine ligase from Sodalis glossinidius (strain morsitans).